The following is a 149-amino-acid chain: Transcriptional repressor NrdR (149 aa).

The segment at Cys3 to Cys34 is a zinc-finger region. The ATP-cone domain occupies Pro49–Glu139.

This sequence belongs to the NrdR family. Zn(2+) is required as a cofactor.

Negatively regulates transcription of bacterial ribonucleotide reductase nrd genes and operons by binding to NrdR-boxes. The protein is Transcriptional repressor NrdR of Erwinia tasmaniensis (strain DSM 17950 / CFBP 7177 / CIP 109463 / NCPPB 4357 / Et1/99).